The sequence spans 304 residues: Ribosomal RNA small subunit methyltransferase H (304 aa).

S-adenosyl-L-methionine-binding positions include 50-52, D69, F97, D113, and Q120; that span reads GGH.

Belongs to the methyltransferase superfamily. RsmH family.

The protein resides in the cytoplasm. It catalyses the reaction cytidine(1402) in 16S rRNA + S-adenosyl-L-methionine = N(4)-methylcytidine(1402) in 16S rRNA + S-adenosyl-L-homocysteine + H(+). In terms of biological role, specifically methylates the N4 position of cytidine in position 1402 (C1402) of 16S rRNA. This chain is Ribosomal RNA small subunit methyltransferase H, found in Rippkaea orientalis (strain PCC 8801 / RF-1) (Cyanothece sp. (strain PCC 8801)).